We begin with the raw amino-acid sequence, 254 residues long: Axonemal dynein light intermediate polypeptide 1 (254 aa).

Positions methionine 1 to leucine 55 are disordered. A coiled-coil region spans residues alanine 175–glutamine 245.

The protein belongs to the inner dynein arm light chain family.

It is found in the cell projection. The protein resides in the cilium. Its subcellular location is the flagellum. The protein localises to the dynein axonemal particle. It localises to the cytoplasm. In terms of biological role, involved in sperm flagellum assembly. This chain is Axonemal dynein light intermediate polypeptide 1, found in Xenopus laevis (African clawed frog).